A 99-amino-acid polypeptide reads, in one-letter code: MLFRLLSPLSPLALTALLLFLLSPGEVSGLLLRPLPAPCLLLFLPFQILSNLLFLLFLPLFFSLPLLLSPSLPITMRFPARWRFPPWRAPSQPAAAFLF.

The SH3-binding motif lies at 4–11 (RLLSPLSP). A helical membrane pass occupies residues 12-32 (LALTALLLFLLSPGEVSGLLL). The SH3-binding motif lies at 33–38 (RPLPAP). The chain crosses the membrane as a helical span at residues 48–68 (ILSNLLFLLFLPLFFSLPLLL). 2 consecutive short sequence motifs (SH3-binding) follow at residues 70–77 (PSLPITMR) and 88–93 (RAPSQP).

The protein belongs to the HTLV-1 accessory protein p12I family. As to quaternary structure, p12I is a homodimer. Interacts with human CANX, CALR, ATP6V0C, IL2RB, IL2RG. Binds to MHC-I heavy chains HLA-A2, HLA-B7 and HLA-Cw4. Post-translationally, ubiquitinated; a fraction of P12I is degraded via the ubiquitin system.

Its subcellular location is the host endoplasmic reticulum membrane. It localises to the host Golgi apparatus. The protein resides in the host cis-Golgi network membrane. P12I is a modulator of T-lymphocyte proliferation and immune function and may contribute to establish a persistent infection. Binds and down-modulates cell surface expression of interleukin-2 receptors IL2RB and IL2RG. Also down-modulates cell surface MHC-I molecules by binding to free immature MHC-I heavy chains in the ER and targeting them to the proteasome for degradation. Binding to IL2RB mediates recruitment of JAK1 and JAK3. As a result of this interaction, p12I increases DNA-binding and transcriptional activity of STAT5. This chain is Accessory protein p12I, found in Homo sapiens (Human).